Here is a 445-residue protein sequence, read N- to C-terminus: uncharacterized protein (445 aa).

Residue His66 participates in Zn(2+) binding. The Proton acceptor role is filled by Glu69. The Zn(2+) site is built by His70 and Glu146. Residues 232–251 (GRQSAPPRKSTGRINGGPAL) form a disordered region.

This sequence belongs to the peptidase M16 family. Zn(2+) serves as cofactor.

This is an uncharacterized protein from Mycobacterium leprae (strain TN).